A 245-amino-acid polypeptide reads, in one-letter code: Phosphoribosylaminoimidazole-succinocarboxamide synthase (245 aa).

The protein belongs to the SAICAR synthetase family.

It catalyses the reaction 5-amino-1-(5-phospho-D-ribosyl)imidazole-4-carboxylate + L-aspartate + ATP = (2S)-2-[5-amino-1-(5-phospho-beta-D-ribosyl)imidazole-4-carboxamido]succinate + ADP + phosphate + 2 H(+). It participates in purine metabolism; IMP biosynthesis via de novo pathway; 5-amino-1-(5-phospho-D-ribosyl)imidazole-4-carboxamide from 5-amino-1-(5-phospho-D-ribosyl)imidazole-4-carboxylate: step 1/2. This Trichormus variabilis (strain ATCC 29413 / PCC 7937) (Anabaena variabilis) protein is Phosphoribosylaminoimidazole-succinocarboxamide synthase.